A 121-amino-acid polypeptide reads, in one-letter code: Large ribosomal subunit protein uL14 (121 aa).

The protein belongs to the universal ribosomal protein uL14 family. Part of the 50S ribosomal subunit. Forms a cluster with proteins L3 and L19. In the 70S ribosome, L14 and L19 interact and together make contacts with the 16S rRNA in bridges B5 and B8.

Its function is as follows. Binds to 23S rRNA. Forms part of two intersubunit bridges in the 70S ribosome. This chain is Large ribosomal subunit protein uL14, found in Aquifex aeolicus (strain VF5).